The chain runs to 165 residues: Putative BTB/POZ domain-containing protein At2g40440 (165 aa).

Residues 24 to 98 (VDVRLKAGDS…IYSDGSMLSA (75 aa)) enclose the BTB domain.

It participates in protein modification; protein ubiquitination. Its function is as follows. May act as a substrate-specific adapter of an E3 ubiquitin-protein ligase complex (CUL3-RBX1-BTB) which mediates the ubiquitination and subsequent proteasomal degradation of target proteins. The chain is Putative BTB/POZ domain-containing protein At2g40440 from Arabidopsis thaliana (Mouse-ear cress).